The primary structure comprises 165 residues: Phosphopantetheine adenylyltransferase (165 aa).

A substrate-binding site is contributed by Thr-10. ATP is bound by residues 10-11 and His-18; that span reads TF. 3 residues coordinate substrate: Lys-42, Leu-74, and Arg-88. Residues 89-91, Glu-99, and 124-130 each bind ATP; these read GLR and NAFISSS.

This sequence belongs to the bacterial CoaD family. Homohexamer. Requires Mg(2+) as cofactor.

It localises to the cytoplasm. The catalysed reaction is (R)-4'-phosphopantetheine + ATP + H(+) = 3'-dephospho-CoA + diphosphate. The protein operates within cofactor biosynthesis; coenzyme A biosynthesis; CoA from (R)-pantothenate: step 4/5. In terms of biological role, reversibly transfers an adenylyl group from ATP to 4'-phosphopantetheine, yielding dephospho-CoA (dPCoA) and pyrophosphate. The protein is Phosphopantetheine adenylyltransferase of Helicobacter hepaticus (strain ATCC 51449 / 3B1).